A 427-amino-acid chain; its full sequence is Serine hydroxymethyltransferase (427 aa).

Residues L122 and 126–128 (GHL) each bind (6S)-5,6,7,8-tetrahydrofolate. The residue at position 231 (K231) is an N6-(pyridoxal phosphate)lysine. (6S)-5,6,7,8-tetrahydrofolate is bound by residues E247 and 355 to 357 (SPF).

It belongs to the SHMT family. In terms of assembly, homodimer. Pyridoxal 5'-phosphate is required as a cofactor.

It is found in the cytoplasm. It catalyses the reaction (6R)-5,10-methylene-5,6,7,8-tetrahydrofolate + glycine + H2O = (6S)-5,6,7,8-tetrahydrofolate + L-serine. It participates in one-carbon metabolism; tetrahydrofolate interconversion. Its pathway is amino-acid biosynthesis; glycine biosynthesis; glycine from L-serine: step 1/1. In terms of biological role, catalyzes the reversible interconversion of serine and glycine with tetrahydrofolate (THF) serving as the one-carbon carrier. This reaction serves as the major source of one-carbon groups required for the biosynthesis of purines, thymidylate, methionine, and other important biomolecules. Also exhibits THF-independent aldolase activity toward beta-hydroxyamino acids, producing glycine and aldehydes, via a retro-aldol mechanism. This chain is Serine hydroxymethyltransferase, found in Microcystis aeruginosa (strain NIES-843 / IAM M-2473).